The chain runs to 601 residues: Elongation factor 4 (601 aa).

Residues 6–188 form the tr-type G domain; the sequence is SHIRNFSIIA…QIVHRVPAPE (183 aa). Residues 18–23 and 135–138 contribute to the GTP site; these read DHGKST and NKID.

Belongs to the TRAFAC class translation factor GTPase superfamily. Classic translation factor GTPase family. LepA subfamily.

Its subcellular location is the cell inner membrane. It catalyses the reaction GTP + H2O = GDP + phosphate + H(+). In terms of biological role, required for accurate and efficient protein synthesis under certain stress conditions. May act as a fidelity factor of the translation reaction, by catalyzing a one-codon backward translocation of tRNAs on improperly translocated ribosomes. Back-translocation proceeds from a post-translocation (POST) complex to a pre-translocation (PRE) complex, thus giving elongation factor G a second chance to translocate the tRNAs correctly. Binds to ribosomes in a GTP-dependent manner. This Anaeromyxobacter dehalogenans (strain 2CP-1 / ATCC BAA-258) protein is Elongation factor 4.